Reading from the N-terminus, the 269-residue chain is Monofunctional glycosyltransferase (269 aa).

The helical transmembrane segment at A46 to S66 threads the bilayer.

Belongs to the glycosyltransferase 51 family.

It is found in the cell membrane. It catalyses the reaction [GlcNAc-(1-&gt;4)-Mur2Ac(oyl-L-Ala-gamma-D-Glu-L-Lys-D-Ala-D-Ala)](n)-di-trans,octa-cis-undecaprenyl diphosphate + beta-D-GlcNAc-(1-&gt;4)-Mur2Ac(oyl-L-Ala-gamma-D-Glu-L-Lys-D-Ala-D-Ala)-di-trans,octa-cis-undecaprenyl diphosphate = [GlcNAc-(1-&gt;4)-Mur2Ac(oyl-L-Ala-gamma-D-Glu-L-Lys-D-Ala-D-Ala)](n+1)-di-trans,octa-cis-undecaprenyl diphosphate + di-trans,octa-cis-undecaprenyl diphosphate + H(+). It participates in cell wall biogenesis; peptidoglycan biosynthesis. Peptidoglycan polymerase that catalyzes glycan chain elongation using lipid-linked disaccharide-pentapeptide as the substrate. This Staphylococcus epidermidis (strain ATCC 35984 / DSM 28319 / BCRC 17069 / CCUG 31568 / BM 3577 / RP62A) protein is Monofunctional glycosyltransferase.